The following is a 166-amino-acid chain: Lipoprotein signal peptidase (166 aa).

The next 3 membrane-spanning stretches (helical) occupy residues 12 to 32, 70 to 90, and 102 to 122; these read WLWL…LILQ, WFFA…MYRS, and ALII…GFVV. Residues aspartate 123 and aspartate 141 contribute to the active site. The chain crosses the membrane as a helical span at residues 137-157; the sequence is FNLADSAICIGAALIVLEGFL.

The protein belongs to the peptidase A8 family.

It is found in the cell inner membrane. The catalysed reaction is Release of signal peptides from bacterial membrane prolipoproteins. Hydrolyzes -Xaa-Yaa-Zaa-|-(S,diacylglyceryl)Cys-, in which Xaa is hydrophobic (preferably Leu), and Yaa (Ala or Ser) and Zaa (Gly or Ala) have small, neutral side chains.. It functions in the pathway protein modification; lipoprotein biosynthesis (signal peptide cleavage). In terms of biological role, this protein specifically catalyzes the removal of signal peptides from prolipoproteins. This is Lipoprotein signal peptidase from Salmonella choleraesuis (strain SC-B67).